We begin with the raw amino-acid sequence, 33 residues long: Beta-theraphotoxin-Cm1a (33 aa).

Disulfide bonds link cysteine 2–cysteine 17, cysteine 9–cysteine 22, and cysteine 16–cysteine 29. Leucine 33 carries the leucine amide modification.

Belongs to the neurotoxin 10 (Hwtx-1) family. 04 (CcoTx1) subfamily. As to expression, expressed by the venom gland.

Its subcellular location is the secreted. Inhibits many voltage-gated sodium channels and one voltage-gated calcium channel (Cav2.2/CACNA1B (IC(50)=400 nM), Nav1.2/SCN2A (IC(50)=3-70 nM), Nav1.1/SCN1A (IC(50)=523-1060 nM), Nav1.7/SCN9A (IC(50)=129.1-5120 nM), Nav1.4/SCN4A (IC(50)=263-888 nM or &gt;10 uM) and Nav1.5/SCN5A (IC(50)=188-323 nM or &gt;10 uM)). It acts by shifting the voltage dependence of channel activation to more depolarized potentials and by blocking the inward component of the sodium current. It shows moderate affinity for lipid bilayers. On Nav1.7/SCN9A, it has been shown to interact with the S3-S4 loop of domain DII (site 4). Is significantly more potent against Nav1.2/SCN2A than the other Nav channel subtypes. In vivo, this toxin causes general ataxia, lack of response to stimuli, and semiparalysis. After a few minutes, the mice are unable to stand, and breathing is reduced in rhythm and intensity. Symptoms gradually increase with progressive slowing of breathing and flaccid paralysis, death occurred within 10 to 20 minutes post injection. Animals remain totally flaccid, and no symptoms of excitatory neurotoxicity are observed. The protein is Beta-theraphotoxin-Cm1a of Ceratogyrus marshalli (Straighthorned baboon tarantula).